A 284-amino-acid polypeptide reads, in one-letter code: T-cell leukemia homeobox protein 2 (284 aa).

Disordered regions lie at residues 1–50 (MEPG…NGAF), 78–106 (GGVIRVPAHRPLPVPPPAGGAPAVPGPSG), and 139–166 (FSGTRRIGHPYQNRTPPKRKKPRTSFSR). Residues 30–50 (TPGGGLGLGRGGQGHGENGAF) show a composition bias toward gly residues. Positions 87–96 (RPLPVPPPAG) are enriched in pro residues. The segment at residues 157–216 (RKKPRTSFSRSQVLELERRFLRQKYLASAERAALAKALRMTDAQVKTWFQNRRTKWRRQT) is a DNA-binding region (homeobox).

It is found in the nucleus. Its function is as follows. Transcription activator that binds DNA elements with the consensus sequence 5'-CGGTAATTGG-3'. Binds DNA via its homeobox. Required for normal cell death of enteric neurons in the gastrointestinal tract. Required for normal development of the enteric nervous system, and for proper development of normal motility of the gastrointestinal tract. The protein is T-cell leukemia homeobox protein 2 (TLX2) of Homo sapiens (Human).